We begin with the raw amino-acid sequence, 538 residues long: Nucleobase-ascorbate transporter 7 (538 aa).

The segment covering 1 to 11 (MAGGGGGGGGV) has biased composition (gly residues). The interval 1–20 (MAGGGGGGGGVAPPLKHDGL) is disordered. The next 12 helical transmembrane spans lie at 45–65 (AILL…LIPT), 81–101 (MVQT…FFGT), 103–123 (LPAV…IILA), 143–163 (IQGA…SGLW), 166–186 (VVRL…GFGL), 191–211 (FPLL…LLLF), 229–249 (FAVI…TVGG), 295–315 (FAMM…YIVV), 372–394 (VVQI…AIFA), 398–420 (APVV…LSLL), 432–452 (FILG…NQYT), and 471–491 (INVP…FLDV).

Belongs to the nucleobase:cation symporter-2 (NCS2) (TC 2.A.40) family. In terms of tissue distribution, expressed exclusively in ovules.

The protein resides in the cell membrane. The protein is Nucleobase-ascorbate transporter 7 (NAT7) of Arabidopsis thaliana (Mouse-ear cress).